An 81-amino-acid chain; its full sequence is Antimicrobial peptide Con22 (81 aa).

Positions 1–22 (MNAKVMLVCLLVTMLVMEPAEA) are cleaved as a signal peptide. A propeptide spanning residues 66–81 (EAGQIPFDEFMNVLYS) is cleaved from the precursor.

The protein belongs to the non-disulfide-bridged peptide (NDBP) superfamily. Long chain multifunctional peptide (group 2) family. Expressed by the venom gland.

Its subcellular location is the secreted. It localises to the target cell membrane. Functionally, at high concentrations, acts as a pore former in cellular membranes and causes the leakage of the cells. At submicromolar concentrations, degranulates granulocytes and has a weak hemolytic activity against human erythrocytes. Also strongly inhibits the production of superoxide anions. Has a strong antibacterial activity against Gram-negative bacteria but is less active against Gram-positive bacteria. Also has antifungal activity. The protein is Antimicrobial peptide Con22 of Urodacus yaschenkoi (Inland robust scorpion).